Here is a 461-residue protein sequence, read N- to C-terminus: GTPase Der (461 aa).

EngA-type G domains are found at residues 3 to 167 (PQVI…GEKQ) and 190 to 371 (LKLA…AAWS). GTP contacts are provided by residues 9 to 16 (GRPNVGKS), 56 to 60 (DTAGW), 119 to 122 (NKAE), 196 to 203 (GRPNAGKS), 249 to 253 (DTAGM), and 314 to 317 (NKWD). In terms of domain architecture, KH-like spans 372–456 (KRVPTAALNR…PIRLTLRSPK (85 aa)).

This sequence belongs to the TRAFAC class TrmE-Era-EngA-EngB-Septin-like GTPase superfamily. EngA (Der) GTPase family. In terms of assembly, associates with the 50S ribosomal subunit.

Its function is as follows. GTPase that plays an essential role in the late steps of ribosome biogenesis. The chain is GTPase Der from Novosphingobium aromaticivorans (strain ATCC 700278 / DSM 12444 / CCUG 56034 / CIP 105152 / NBRC 16084 / F199).